The following is a 359-amino-acid chain: DNA polymerase IV (359 aa).

The UmuC domain occupies 4-184; the sequence is IVHVDMDAFY…LKVNRIPGVG (181 aa). Mg(2+) is bound by residues Asp-8 and Asp-102. Glu-103 is a catalytic residue.

Belongs to the DNA polymerase type-Y family. In terms of assembly, monomer. Requires Mg(2+) as cofactor.

The protein resides in the cytoplasm. It catalyses the reaction DNA(n) + a 2'-deoxyribonucleoside 5'-triphosphate = DNA(n+1) + diphosphate. Functionally, poorly processive, error-prone DNA polymerase involved in untargeted mutagenesis. Copies undamaged DNA at stalled replication forks, which arise in vivo from mismatched or misaligned primer ends. These misaligned primers can be extended by PolIV. Exhibits no 3'-5' exonuclease (proofreading) activity. May be involved in translesional synthesis, in conjunction with the beta clamp from PolIII. This is DNA polymerase IV from Xanthomonas axonopodis pv. citri (strain 306).